A 234-amino-acid chain; its full sequence is Glucosamine-6-phosphate deaminase (234 aa).

Asp-62 (proton acceptor; for enolization step) is an active-site residue. Catalysis depends on Asn-128, which acts as the For ring-opening step. His-130 functions as the Proton acceptor; for ring-opening step in the catalytic mechanism. Glu-135 (for ring-opening step) is an active-site residue.

The protein belongs to the glucosamine/galactosamine-6-phosphate isomerase family. NagB subfamily.

It carries out the reaction alpha-D-glucosamine 6-phosphate + H2O = beta-D-fructose 6-phosphate + NH4(+). Its pathway is amino-sugar metabolism; N-acetylneuraminate degradation; D-fructose 6-phosphate from N-acetylneuraminate: step 5/5. In terms of biological role, catalyzes the reversible isomerization-deamination of glucosamine 6-phosphate (GlcN6P) to form fructose 6-phosphate (Fru6P) and ammonium ion. In Streptococcus equi subsp. equi (strain 4047), this protein is Glucosamine-6-phosphate deaminase.